The primary structure comprises 100 residues: Small ribosomal subunit protein uS14 (100 aa).

This sequence belongs to the universal ribosomal protein uS14 family. In terms of assembly, part of the 30S ribosomal subunit. Contacts proteins S3 and S10.

Its function is as follows. Binds 16S rRNA, required for the assembly of 30S particles and may also be responsible for determining the conformation of the 16S rRNA at the A site. The polypeptide is Small ribosomal subunit protein uS14 (Rippkaea orientalis (strain PCC 8801 / RF-1) (Cyanothece sp. (strain PCC 8801))).